The following is a 245-amino-acid chain: tRNA1(Val) (adenine(37)-N6)-methyltransferase (245 aa).

Belongs to the methyltransferase superfamily. tRNA (adenine-N(6)-)-methyltransferase family.

The protein resides in the cytoplasm. The catalysed reaction is adenosine(37) in tRNA1(Val) + S-adenosyl-L-methionine = N(6)-methyladenosine(37) in tRNA1(Val) + S-adenosyl-L-homocysteine + H(+). Its function is as follows. Specifically methylates the adenine in position 37 of tRNA(1)(Val) (anticodon cmo5UAC). The protein is tRNA1(Val) (adenine(37)-N6)-methyltransferase of Salmonella paratyphi C (strain RKS4594).